Here is a 133-residue protein sequence, read N- to C-terminus: Small ribosomal subunit protein uS8 (133 aa).

The protein belongs to the universal ribosomal protein uS8 family. Part of the 30S ribosomal subunit. Contacts proteins S5 and S12.

Its function is as follows. One of the primary rRNA binding proteins, it binds directly to 16S rRNA central domain where it helps coordinate assembly of the platform of the 30S subunit. The chain is Small ribosomal subunit protein uS8 from Chlamydia trachomatis serovar A (strain ATCC VR-571B / DSM 19440 / HAR-13).